We begin with the raw amino-acid sequence, 266 residues long: Protein-ADP-ribose hydrolase (266 aa).

In terms of domain architecture, Macro spans 74 to 265 (TDLKDLKPIK…LYKEALNRDA (192 aa)). ADP-D-ribose is bound by residues Asp93, Ile94, and Asn107. 3 residues coordinate Zn(2+): Cys113, His118, and Cys120. Residues Cys120, Ile121, Asp122, Ser212, Thr213, Gly214, and Phe216 each coordinate ADP-D-ribose.

It belongs to the MacroD-type family. Zn-Macro subfamily. In terms of assembly, monomer. Directly interacts with the lipoylated form of GcvH-L. It depends on Zn(2+) as a cofactor.

It carries out the reaction 4-O-(ADP-D-ribosyl)-L-aspartyl-[protein] + H2O = L-aspartyl-[protein] + ADP-D-ribose + H(+). In terms of biological role, ADP-ribosylhydrolase that specifically reverses the SirTM-mediated mono-ADP-ribosylation at an asparatate residue of GcvH-L (SAV0324), by releasing ADP-ribose from the target protein. May play a role in the regulation of the response to host-induced oxidative stress. The protein is Protein-ADP-ribose hydrolase of Staphylococcus aureus (strain Mu50 / ATCC 700699).